The chain runs to 346 residues: MIILGFESSCDETGVAAVCTERGLLAHALHTQIAMHQEYGGVVPELASRDHIRRVVPLTRQVLAEAGLTLADVGAVAYTAGPGLAGALLVGASVAQALAWSRALPAIGIHHLEGHLLSPLLAEPRPEFPFVALLVSGGHTQLMRVDGVGRYELLGETLDDAAGEAFDKSAKLMGLGYPGGSALARLAEQGDASRYDLPRPMLHSGDLDFSFSGLKTAVLTRVKAATRDGGELGEQDRADLAAATQAAIVEVLAAKAIRALKQTGLRRLVVAGGVGANALLRAHLARALKPLRAEAYFPPLSLCTDNGAMIAFAAAERVKAGLADLREGDHAFTVRPRWDLADIQAG.

2 residues coordinate Fe cation: His111 and His115. Substrate contacts are provided by residues 134–138, Asp167, Gly180, and Asn277; that span reads LVSGG. Asp305 contributes to the Fe cation binding site.

The protein belongs to the KAE1 / TsaD family. The cofactor is Fe(2+).

It is found in the cytoplasm. The enzyme catalyses L-threonylcarbamoyladenylate + adenosine(37) in tRNA = N(6)-L-threonylcarbamoyladenosine(37) in tRNA + AMP + H(+). In terms of biological role, required for the formation of a threonylcarbamoyl group on adenosine at position 37 (t(6)A37) in tRNAs that read codons beginning with adenine. Is involved in the transfer of the threonylcarbamoyl moiety of threonylcarbamoyl-AMP (TC-AMP) to the N6 group of A37, together with TsaE and TsaB. TsaD likely plays a direct catalytic role in this reaction. The polypeptide is tRNA N6-adenosine threonylcarbamoyltransferase (Bordetella parapertussis (strain 12822 / ATCC BAA-587 / NCTC 13253)).